Here is a 247-residue protein sequence, read N- to C-terminus: 2,3-bisphosphoglycerate-dependent phosphoglycerate mutase (247 aa).

Residues 8–15 (RHGESQWN), 21–22 (TG), arginine 60, 87–90 (ERHY), lysine 98, 114–115 (RR), and 183–184 (GN) contribute to the substrate site. Histidine 9 acts as the Tele-phosphohistidine intermediate in catalysis. Catalysis depends on glutamate 87, which acts as the Proton donor/acceptor.

It belongs to the phosphoglycerate mutase family. BPG-dependent PGAM subfamily.

The enzyme catalyses (2R)-2-phosphoglycerate = (2R)-3-phosphoglycerate. Its pathway is carbohydrate degradation; glycolysis; pyruvate from D-glyceraldehyde 3-phosphate: step 3/5. In terms of biological role, catalyzes the interconversion of 2-phosphoglycerate and 3-phosphoglycerate. In Chlorobaculum parvum (strain DSM 263 / NCIMB 8327) (Chlorobium vibrioforme subsp. thiosulfatophilum), this protein is 2,3-bisphosphoglycerate-dependent phosphoglycerate mutase.